The primary structure comprises 38 residues: Kunitz-type trypsin inhibitor beta chain (38 aa).

Belongs to the protease inhibitor I3 (leguminous Kunitz-type inhibitor) family. Heterodimer of an alpha and a beta chain linked by a disulfide bond.

In terms of biological role, inhibition of trypsin. This chain is Kunitz-type trypsin inhibitor beta chain, found in Neltuma juliflora (Mesquite).